We begin with the raw amino-acid sequence, 150 residues long: Large ribosomal subunit protein bL9 (150 aa).

The protein belongs to the bacterial ribosomal protein bL9 family.

Its function is as follows. Binds to the 23S rRNA. The sequence is that of Large ribosomal subunit protein bL9 from Enterococcus faecalis (strain ATCC 700802 / V583).